Consider the following 335-residue polypeptide: Probable deoxyhypusine synthase (335 aa).

The active-site Nucleophile is the Lys308.

The protein belongs to the deoxyhypusine synthase family. NAD(+) is required as a cofactor.

The enzyme catalyses [eIF5A protein]-L-lysine + spermidine = [eIF5A protein]-deoxyhypusine + propane-1,3-diamine. Its pathway is protein modification; eIF5A hypusination. Catalyzes the NAD-dependent oxidative cleavage of spermidine and the subsequent transfer of the butylamine moiety of spermidine to the epsilon-amino group of a specific lysine residue of the eIF-5A precursor protein to form the intermediate deoxyhypusine residue. The chain is Probable deoxyhypusine synthase from Thermococcus onnurineus (strain NA1).